We begin with the raw amino-acid sequence, 429 residues long: Dihydroorotase (429 aa).

H59 and H61 together coordinate Zn(2+). Residues 61 to 63 (HLR) and N93 contribute to the substrate site. Zn(2+) contacts are provided by K143, H171, H229, and D298. K143 is subject to N6-carboxylysine. D298 is a catalytic residue. Substrate-binding positions include H302 and 316-317 (AG).

The protein belongs to the metallo-dependent hydrolases superfamily. DHOase family. Class I DHOase subfamily. The cofactor is Zn(2+).

It catalyses the reaction (S)-dihydroorotate + H2O = N-carbamoyl-L-aspartate + H(+). It functions in the pathway pyrimidine metabolism; UMP biosynthesis via de novo pathway; (S)-dihydroorotate from bicarbonate: step 3/3. Its function is as follows. Catalyzes the reversible cyclization of carbamoyl aspartate to dihydroorotate. The protein is Dihydroorotase of Methanosphaera stadtmanae (strain ATCC 43021 / DSM 3091 / JCM 11832 / MCB-3).